The primary structure comprises 2754 residues: Neurobeachin-like protein 2 (2754 aa).

Disordered stretches follow at residues 1298–1338 (TAGS…SEAP) and 1364–1438 (SVGS…QQTS). Composition is skewed to pro residues over residues 1301–1323 (SPPP…PPTE) and 1388–1400 (TPSP…PFPA). The segment covering 1425-1437 (GDDTSNTSNPQQT) has biased composition (polar residues). Position 1647 is a phosphoserine (Ser1647). Thr1867 bears the Phosphothreonine mark. Positions 1915–2040 (EQREKLVLSA…VRNQVYSWLL (126 aa)) constitute a BEACH-type PH domain. In terms of domain architecture, BEACH spans 2053 to 2345 (RSPQEMLRAS…QLLKEPHPTR (293 aa)). 7 WD repeats span residues 2386 to 2424 (LVLA…SWLP), 2448 to 2491 (RLLS…ALPR), 2494 to 2531 (LLSQ…VWRL), 2544 to 2582 (KPVQ…IHTV), 2589 to 2631 (AALR…TYSL), 2639 to 2674 (KLRA…ILQL), and 2682 to 2717 (PPLP…VVAG). Phosphoserine is present on residues Ser2739 and Ser2742.

This sequence belongs to the WD repeat neurobeachin family. In terms of tissue distribution, expressed in megakaryocytes.

It localises to the endoplasmic reticulum. Probably involved in thrombopoiesis. Plays a role in the development or secretion of alpha-granules, that contain several growth factors important for platelet biogenesis. In Homo sapiens (Human), this protein is Neurobeachin-like protein 2 (NBEAL2).